We begin with the raw amino-acid sequence, 119 residues long: Phytosulfokines 2 (119 aa).

A signal peptide spans 1–34 (MSTTRGVSSSSAAAALALLLLFALCFFSFHSAAA). Residues 35–109 (ARAVPRDEHQ…RRLLSDAHLD (75 aa)) constitute a propeptide that is removed on maturation. 2 positions are modified to sulfotyrosine: Tyr110 and Tyr112. Positions 115 to 119 (HKNKP) are excised as a propeptide.

The protein belongs to the phytosulfokine family. Sulfation is important for activity and for the binding to a putative membrane receptor. Post-translationally, PSK-alpha is produced by endopeptidase digestion. PSK-beta is produced from PSK-alpha by exopeptidase digestion.

It localises to the secreted. Its function is as follows. Promotes plant cell differentiation, organogenesis and somatic embryogenesis as well as cell proliferation. The polypeptide is Phytosulfokines 2 (PSK2) (Oryza sativa subsp. indica (Rice)).